Reading from the N-terminus, the 474-residue chain is ATP-dependent rRNA helicase RRP3 (474 aa).

A compositionally biased stretch (basic residues) spans 1–10; it reads MPSMKRRKLS. A disordered region spans residues 1–43; it reads MPSMKRRKLSHTPPQGEAEDGFSDSETSQASLQETPGNDEKIE. Positions 24–36 are enriched in polar residues; it reads DSETSQASLQETP. The Q motif motif lies at 48–76; it reads KSFKDLGIIDSLCEACDSLGYKAPTQIQA. Residues 79–250 form the Helicase ATP-binding domain; it reads IPLALQGRDL…RASLSNPLRV (172 aa). Residue 92–99 coordinates ATP; sequence AETGSGKT. Residues 198 to 201 carry the DEAD box motif; it reads DEAD. The Helicase C-terminal domain maps to 278 to 422; that stretch reads YLIYLLNEFP…EYKVEKEEVM (145 aa). Positions 442-474 are disordered; that stretch reads LHENRGKKGATLRNRRIGKGAKRSRDEMDREEG. The segment covering 448–463 has biased composition (basic residues); it reads KKGATLRNRRIGKGAK. The segment covering 464–474 has biased composition (basic and acidic residues); that stretch reads RSRDEMDREEG.

This sequence belongs to the DEAD box helicase family. DDX47/RRP3 subfamily. Interacts with the SSU processome.

Its subcellular location is the nucleus. The catalysed reaction is ATP + H2O = ADP + phosphate + H(+). Functionally, ATP-dependent rRNA helicase required for pre-ribosomal RNA processing. Involved in the maturation of the 35S-pre-rRNA and to its cleavage to mature 18S rRNA. This chain is ATP-dependent rRNA helicase RRP3, found in Coccidioides immitis (strain RS) (Valley fever fungus).